The primary structure comprises 2376 residues: Reducing polyketide synthase DEP5 (2376 aa).

Residues Leu-47–Ser-477 form the Ketosynthase family 3 (KS3) domain. Active-site for beta-ketoacyl synthase activity residues include Cys-221, His-358, and His-399. The malonyl-CoA:ACP transacylase (MAT) domain stretch occupies residues Val-593–Phe-906. Ser-685 (for malonyltransferase activity) is an active-site residue. An N-terminal hotdog fold region spans residues His-983 to Arg-1121. A dehydratase (DH) domain region spans residues His-983–Met-1158. Residues His-983–Gln-1286 enclose the PKS/mFAS DH domain. His-1015 serves as the catalytic Proton acceptor; for dehydratase activity. A C-terminal hotdog fold region spans residues Leu-1131 to Gln-1286. The Proton donor; for dehydratase activity role is filled by Asp-1195. Residues Gly-1659–Ile-1964 are enoyl reductase (ER) domain. Residues Ala-1988–Met-2163 form a ketoreductase (KR) domain region. The region spanning Asp-2289–Gln-2368 is the Carrier domain. Ser-2327 carries the post-translational modification O-(pantetheine 4'-phosphoryl)serine.

It participates in polyketide biosynthesis. Reducing polyketide synthase; part of the gene cluster that mediates the biosynthesis of depudecin, a highly oxidized eleven-carbon linear polyketide that acts as a histone deacetylase (HDAC) inhibitor and makes a small contribution to pathogenesis. The reducing polyketide synthase DEP5 is the central enzyme in depudecin biosynthesis by yielding the backbone polyketide chain. The monooxygenases DEP2 and DEP4, as well as the uncharacterized protein DEP1, then act as tailoring enzymes to modify the intermediate polyketide chain into depudecin. This is Reducing polyketide synthase DEP5 from Alternaria brassicicola (Dark leaf spot agent).